Here is a 131-residue protein sequence, read N- to C-terminus: D-ribose pyranase (131 aa).

The active-site Proton donor is His-20. Residues Asp-28, His-98, and 120-122 (YAN) each bind substrate.

This sequence belongs to the RbsD / FucU family. RbsD subfamily. In terms of assembly, homodecamer.

The protein resides in the cytoplasm. The enzyme catalyses beta-D-ribopyranose = beta-D-ribofuranose. Its pathway is carbohydrate metabolism; D-ribose degradation; D-ribose 5-phosphate from beta-D-ribopyranose: step 1/2. Functionally, catalyzes the interconversion of beta-pyran and beta-furan forms of D-ribose. The protein is D-ribose pyranase of Bacillus licheniformis (strain ATCC 14580 / DSM 13 / JCM 2505 / CCUG 7422 / NBRC 12200 / NCIMB 9375 / NCTC 10341 / NRRL NRS-1264 / Gibson 46).